A 377-amino-acid polypeptide reads, in one-letter code: Stimulator of interferon genes protein (377 aa).

Over 1–21 the chain is Cytoplasmic; it reads MRRAEENNGFGTIPKRRNQHT. Residues 22 to 42 traverse the membrane as a helical segment; the sequence is PFYASIGMIVVIIVAFTSYHI. Residues 43-57 lie on the Extracellular side of the membrane; the sequence is TSYGDDRNRAMRQYS. Residues 58 to 80 traverse the membrane as a helical segment; that stretch reads FTFSLAYLAFLVGELLRRCCLFA. Over 81–101 the chain is Cytoplasmic; the sequence is EEYRHIETRYNGSLKKAIQTT. A helical transmembrane segment spans residues 102 to 122; that stretch reads FSFGHNNVLFVASLLFFVVFV. At 123–154 the chain is on the extracellular side; the sequence is ASNDPNGSSSVIQGNSTAEPHTEMRQTSGWQG. The chain crosses the membrane as a helical span at residues 155–175; sequence LWGQFIISALLTPLVVHLLGL. Over 176–377 the chain is Cytoplasmic; it reads RELSKVEESQ…LKDSELEIGG (202 aa). 2',3'-cGAMP contacts are provided by residues tyrosine 206, arginine 272, 278-279, and threonine 303; that span reads RH. 3',3'-c-di-GMP contacts are provided by residues tyrosine 206, arginine 272, arginine 278, and 300–303; that span reads EYAT.

The protein belongs to the TMEM173 family. Homodimer.

The protein resides in the endoplasmic reticulum membrane. In terms of biological role, sensor of cytosolic DNA from bacteria and viruses that promotes autophagy. Acts by recognizing and binding cyclic GMP-AMP (cGAMP), a messenger produced by CGAS in response to DNA in the cytosol. Following cGAMP-binding, promotes the formation of autophagosomes, leading to target cytosolic DNA for degradation by the lysosome. Exhibits guanine base-specific ligand recognition. Binds 3'-3'linked cGAMP, 2'-3' linked cGAMP and 3'-3' linked c-di-GMP with much greater affinity as compared to 3'-3' linked c-di-AMP. Lacks the C-terminal tail (CTT) found in mammalian orthologs which is essential for interferon signaling. The sequence is that of Stimulator of interferon genes protein from Nematostella vectensis (Starlet sea anemone).